Reading from the N-terminus, the 60-residue chain is Light-harvesting protein B-800/850 alpha chain (60 aa).

The Cytoplasmic segment spans residues 1-14 (MNNAKIWTVVKPST). Residues 15–35 (GIPLILGAVAVAALIVHAGLL) traverse the membrane as a helical segment. Histidine 31 lines the a bacteriochlorophyll pocket. At 36–60 (TNTTWFANYWNGNPMATVVAVAPAQ) the chain is on the periplasmic side.

The protein belongs to the antenna complex alpha subunit family. As to quaternary structure, the core complex is formed by different alpha and beta chains, binding bacteriochlorophyll molecules, and arranged most probably in tetrameric structures disposed around the reaction center. The non-pigmented gamma chains may constitute additional components.

It is found in the cell inner membrane. In terms of biological role, antenna complexes are light-harvesting systems, which transfer the excitation energy to the reaction centers. This Rhodobacter capsulatus (Rhodopseudomonas capsulata) protein is Light-harvesting protein B-800/850 alpha chain (pucA).